A 188-amino-acid polypeptide reads, in one-letter code: uncharacterized protein (188 aa).

3 helical membrane-spanning segments follow: residues 6 to 26, 43 to 63, and 110 to 130; these read MIVF…SLPL, FAGR…ILFA, and ALFL…MIAA.

It localises to the membrane. This is an uncharacterized protein from Schizosaccharomyces pombe (strain 972 / ATCC 24843) (Fission yeast).